Consider the following 1299-residue polypeptide: Phosphoribosylformylglycinamidine synthase (1299 aa).

Residues 310 to 321 (GAATGAGGEIRD), 389 to 391 (TGY), and alanine 680 each bind ATP. Residues aspartate 681, glutamate 720, asparagine 724, and aspartate 888 each contribute to the Mg(2+) site. An ATP-binding site is contributed by serine 890. Positions 1046–1299 (VAVLREQGVN…MFRNARVWLG (254 aa)) constitute a Glutamine amidotransferase type-1 domain. Residue cysteine 1139 is the Nucleophile of the active site. Catalysis depends on residues histidine 1264 and glutamate 1266.

The protein in the N-terminal section; belongs to the FGAMS family. As to quaternary structure, monomer.

It localises to the cytoplasm. The enzyme catalyses N(2)-formyl-N(1)-(5-phospho-beta-D-ribosyl)glycinamide + L-glutamine + ATP + H2O = 2-formamido-N(1)-(5-O-phospho-beta-D-ribosyl)acetamidine + L-glutamate + ADP + phosphate + H(+). Its pathway is purine metabolism; IMP biosynthesis via de novo pathway; 5-amino-1-(5-phospho-D-ribosyl)imidazole from N(2)-formyl-N(1)-(5-phospho-D-ribosyl)glycinamide: step 1/2. In terms of biological role, phosphoribosylformylglycinamidine synthase involved in the purines biosynthetic pathway. Catalyzes the ATP-dependent conversion of formylglycinamide ribonucleotide (FGAR) and glutamine to yield formylglycinamidine ribonucleotide (FGAM) and glutamate. The chain is Phosphoribosylformylglycinamidine synthase from Myxococcus xanthus (strain DK1622).